Reading from the N-terminus, the 342-residue chain is Arginase 1, mitochondrial (342 aa).

Residues Met-1–Thr-22 constitute a mitochondrion transit peptide. Residues Ser-77 and Gly-96–Asn-99 contribute to the L-ornithine site. Residues His-161, Asp-185, His-187, and Asp-189 each contribute to the Mn(2+) site. Asp-189–Tyr-191 contacts L-ornithine. Glu-195–Asn-197 lines the substrate pocket. Position 224 (Ser-224) interacts with L-ornithine. Residues Asp-270 and Asp-272 each contribute to the Mn(2+) site. A substrate-binding site is contributed by Glu-313.

Belongs to the arginase family. Forms homohexamers. Mn(2+) serves as cofactor. In terms of tissue distribution, expressed in vasculature of roots, root tips, cotyledons, leaves, cauline leaves, stems, sepals and pollen.

The protein resides in the mitochondrion. It carries out the reaction L-arginine + H2O = urea + L-ornithine. The enzyme catalyses agmatine + H2O = urea + putrescine. The protein operates within nitrogen metabolism; urea cycle; L-ornithine and urea from L-arginine: step 1/1. Its pathway is amine and polyamine biosynthesis; putrescine biosynthesis via agmatine pathway; putrescine from agmatine: step 1/1. Catalyzes the hydrolysis of L-arginine to urea and L-ornithine. The latter can be utilized in the urea cycle or as a precursor for the synthesis of both polyamines and proline. Possesses agmatinase activity. Catalyzes the formation of putrescine from agmatine. The sequence is that of Arginase 1, mitochondrial from Arabidopsis thaliana (Mouse-ear cress).